Consider the following 668-residue polypeptide: Phosphatidylinositol 4-phosphate 5-kinase type-1 gamma (668 aa).

The interval 45–67 is disordered; that stretch reads SMTAQPGPGHGKKLGHRGVDASG. In terms of domain architecture, PIPK spans 75–443; it reads TSSTLKGAIQ…RFFKFMSNTV (369 aa). Lys-265 and Lys-268 each carry N6-acetyllysine. Arg-459 carries the post-translational modification Asymmetric dimethylarginine; alternate. Arg-459 is subject to Omega-N-methylarginine; alternate. The segment covering 526–535 has biased composition (low complexity); the sequence is TTLSSTSLSI. Disordered stretches follow at residues 526-578 and 593-642; these read TTLS…ITVQ and EDAG…YFPT. Ser-555 carries the phosphoserine modification. Tyr-639 is modified (phosphotyrosine; by EGFR). The tract at residues 641–668 is mediates interaction with TLN2; that stretch reads PTDERSWVYSPLHYSAQAPPASDGESDT. Tyr-649 carries the post-translational modification Phosphotyrosine; by CSK. Ser-650 carries the post-translational modification Phosphoserine; by CDK5, MAPK1 and CDK1. Phosphoserine occurs at positions 662 and 666. At Thr-668 the chain carries Phosphothreonine.

In terms of assembly, interacts with TLN1. Interacts with TLN2; interaction stimulates 1-phosphatidylinositol-4-phosphate 5-kinase activity. May compete with beta-integrins for the same binding site on TLN1 and TLN2. Interacts with ARF6; interaction stimulates 1-phosphatidylinositol-4-phosphate 5-kinase activity. Interacts with AP2B1. Interacts with AP2M1; phosphorylation of PIP5K1C by CSK disrupts the interaction; clathrin competes with PIP5K1C. Interacts with CDH1. Interacts with CSK. Interacts with PLCG1; interaction is abolished upon EGF stimulation. Interacts with LAPTM4B; promotes SNX5 association with LAPTM4B; kinase activity of PIP5K1C is required; interaction is regulated by phosphatidylinositol 4,5-bisphosphate generated by PIP5K1C. In terms of processing, phosphorylation on Ser-650 negatively regulates binding to TLN2 and is strongly stimulated in mitosis. Phosphorylation on Tyr-649 is necessary for targeting to focal adhesions. Phosphorylation on Ser-650 and Tyr-649 are mutually exclusive. Phosphorylated by SYK and CSK. Tyrosine phosphorylation is enhanced by PTK2 signaling. Phosphorylated at Tyr-639 upon EGF stimulation. Some studies suggest that phosphorylation on Tyr-649 enhances binding to tailins (TLN1 and TLN2). According to PubMed:15738269 phosphorylation at Tyr-649 does not directly enhance binding to tailins (TLN1 and TLN2) but may act indirectly by inhibiting phosphorylation at Ser-650. Acetylation at Lys-265 and Lys-268 seems to decrease lipid 1-phosphatidylinositol-4-phosphate 5-kinase activity. Deacetylation of these sites by SIRT1 positively regulates the exocytosis of TSH-containing granules from pituitary cells. As to expression, isoform 1 is strongly expressed in brain and also detected in heart and lung. In terms of tissue distribution, isoform 2 is strongly expressed in pancreas and liver and in lesser quantities in brain, heart, lung and kidney. Isoform 3 is detected in large amounts in heart and large intestine, is also present in lung, pancreas and thyroid, and to a lesser extent in brain, stomach and kidney.

The protein resides in the cell membrane. It localises to the endomembrane system. Its subcellular location is the cytoplasm. The protein localises to the cell junction. It is found in the focal adhesion. The protein resides in the adherens junction. It localises to the cell projection. Its subcellular location is the ruffle membrane. The protein localises to the phagocytic cup. It is found in the uropodium. The protein resides in the nucleus. It carries out the reaction a 1,2-diacyl-sn-glycero-3-phospho-(1D-myo-inositol 4-phosphate) + ATP = a 1,2-diacyl-sn-glycero-3-phospho-(1D-myo-inositol-4,5-bisphosphate) + ADP + H(+). It catalyses the reaction 1-octadecanoyl-2-(5Z,8Z,11Z,14Z)-eicosatetraenoyl-sn-glycero-3-phospho-1D-myo-inositol 4-phosphate + ATP = 1-octadecanoyl-2-(5Z,8Z,11Z,14Z)-eicosatetraenoyl-sn-glycero-3-phospho-1D-myo-inositol 4,5-bisphosphate + ADP + H(+). The catalysed reaction is 1-octadecanoyl-2-(9Z)-octadecenoyl-sn-glycero-3-phospho-1D-myo-inositol 4-phosphate + ATP = 1-octadecanoyl-2-(9Z)-octadecenoyl-sn-glycero-3-phospho-1D-myo-inositol 4,5-bisphosphate + ADP + H(+). The enzyme catalyses 1-octadecanoyl-2-(9Z)-octadecenoyl-sn-glycero-3-phospho-1D-myo-inositol + ATP = 1-octadecanoyl-2-(9Z)-octadecenoyl-sn-glycero-3-phospho-1D-myo-inositol 5-phosphate + ADP + H(+). It carries out the reaction 1-octadecanoyl-2-(9Z,12Z)-octadecadienoyl-sn-glycero-3-phospho-1D-myo-inositol + ATP = 1-octadecanoyl-2-(9Z,12Z)-octadecadienoyl-sn-glycero-3-phospho-1D-myo-inositol 5-phosphate + ADP + H(+). It catalyses the reaction 1-octadecanoyl-2-(5Z,8Z,11Z,14Z-eicosatetraenoyl)-sn-glycero-3-phospho-(1D-myo-inositol) + ATP = 1-octadecanoyl-2-(5Z,8Z,11Z,14Z)-eicosatetraenoyl-sn-glycero-3-phospho-1D-myo-inositol 5-phosphate + ADP + H(+). The catalysed reaction is 1,2-di-(9Z,12Z)-octadecadienoyl-sn-glycero-3-phospho-1D-myo-inositol + ATP = 1,2-di(9Z,12Z)-octadecadienoyl-sn-glycero-3-phospho-1D-myo-inositol 5-phosphate + ADP + H(+). Functionally, catalyzes the phosphorylation of phosphatidylinositol 4-phosphate (PtdIns(4)P/PI4P) to form phosphatidylinositol 4,5-bisphosphate (PtdIns(4,5)P2/PIP2), a lipid second messenger that regulates several cellular processes such as signal transduction, vesicle trafficking, actin cytoskeleton dynamics, cell adhesion, and cell motility. PtdIns(4,5)P2 can directly act as a second messenger or can be utilized as a precursor to generate other second messengers: inositol 1,4,5-trisphosphate (IP3), diacylglycerol (DAG) or phosphatidylinositol-3,4,5-trisphosphate (PtdIns(3,4,5)P3/PIP3). PIP5K1A-mediated phosphorylation of PtdIns(4)P is the predominant pathway for PtdIns(4,5)P2 synthesis. Together with PIP5K1A, is required for phagocytosis, both enzymes regulating different types of actin remodeling at sequential steps. Promotes particle attachment by generating the pool of PtdIns(4,5)P2 that induces controlled actin depolymerization to facilitate Fc-gamma-R clustering. Mediates RAC1-dependent reorganization of actin filaments. Required for synaptic vesicle transport. Controls the plasma membrane pool of PtdIns(4,5)P2 implicated in synaptic vesicle endocytosis and exocytosis. Plays a role in endocytosis mediated by clathrin and AP-2 (adaptor protein complex 2). Required for clathrin-coated pits assembly at the synapse. Participates in cell junction assembly. Modulates adherens junctions formation by facilitating CDH1/cadherin trafficking. Required for focal adhesion dynamics. Modulates the targeting of talins (TLN1 and TLN2) to the plasma membrane and their efficient assembly into focal adhesions. Regulates the interaction between talins (TLN1 and TLN2) and beta-integrins. Required for uropodium formation and retraction of the cell rear during directed migration. Has a role in growth factor-stimulated directional cell migration and adhesion. Required for talin assembly into nascent adhesions forming at the leading edge toward the direction of the growth factor. Negative regulator of T-cell activation and adhesion. Negatively regulates integrin alpha-L/beta-2 (LFA-1) polarization and adhesion induced by T-cell receptor. Together with PIP5K1A has a role during embryogenesis and together with PIP5K1B may have a role immediately after birth. The protein is Phosphatidylinositol 4-phosphate 5-kinase type-1 gamma of Homo sapiens (Human).